We begin with the raw amino-acid sequence, 76 residues long: Small proline-rich protein 2F (76 aa).

A run of 3 repeats spans residues Pro21–Pro29, Ser30–Pro38, and Pro39–Glu47. The tract at residues Pro21 to Glu47 is 3 X 9 AA approximate tandem repeats. The tract at residues Ser53–Lys76 is disordered.

The protein belongs to the cornifin (SPRR) family. In terms of tissue distribution, expressed in uterus.

Its subcellular location is the cytoplasm. In terms of biological role, cross-linked envelope protein of keratinocytes. It is a keratinocyte protein that first appears in the cell cytosol, but ultimately becomes cross-linked to membrane proteins by transglutaminase. All that results in the formation of an insoluble envelope beneath the plasma membrane. The sequence is that of Small proline-rich protein 2F (Sprr2f) from Mus musculus (Mouse).